We begin with the raw amino-acid sequence, 550 residues long: MFCVQCEQTIRTPAGNGCSYAQGMCGKTAETSDLQDLLIAALQGLSAWAVKAREYGIINHDVDSFAPRAFFSTLTNVNFDSPRIVGYAREAIALREALKAQCLAVDANARVDNPMANLQLVSDDLGELQRQAAEFTPNKDKAAIGENILGLRLLCLYGLKGAAAYMEHAHVLGQYDNDIYAQYHKIMAWLGTWPADMNALLECSMEIGQMNFKVMSILDAGETGKYGHPTPTQVNVKATAGKCILISGHDLKDLYNLLEQTEGTGVNVYTHGEMLPAHGYPELRKFKHLVGNYGSGWQNQQVEFARFPGPIVMTSNCIIDPTVGAYDDRIWTRSIVGWPGVRHLDGEDFSAVIAQAQQMAGFPYSEIPHLITVGFGRQTLLGAADTLIDLVSREKLRHIFLLGGCDGARGERHYFTDFATSVPDDCLILTLACGKYRFNKLEFGDIEGLPRLVDAGQCNDAYSAIILAVTLAEKLGCGVNDLPLSLVLSWFEQKAIVILLTLLSLGVKNIVTGPTAPGFLTPDLLAVLNEKFGLRSITTVEEDMKQLLSA.

[2Fe-2S] cluster-binding residues include Cys-3, Cys-6, Cys-18, and Cys-25. His-249, Glu-273, Cys-317, Cys-405, Cys-433, Cys-458, Glu-492, and Lys-494 together coordinate hybrid [4Fe-2O-2S] cluster. The residue at position 405 (Cys-405) is a Cysteine persulfide.

This sequence belongs to the HCP family. The cofactor is [2Fe-2S] cluster. Hybrid [4Fe-2O-2S] cluster is required as a cofactor.

The protein resides in the cytoplasm. It carries out the reaction A + NH4(+) + H2O = hydroxylamine + AH2 + H(+). Its function is as follows. Catalyzes the reduction of hydroxylamine to form NH(3) and H(2)O. The protein is Hydroxylamine reductase of Escherichia coli O139:H28 (strain E24377A / ETEC).